Consider the following 1826-residue polypeptide: Transcription initiation factor TFIID subunit 1-like (1826 aa).

Disordered stretches follow at residues 118-141 (DESQRHQQTMGSLQPLYHSDYDED), 532-555 (IPDEKEEATSNSPSKESKKESSLK), and 1252-1276 (RLKRNQEKEKLKGPPEKKPKKMKER). Residues 1252–1268 (RLKRNQEKEKLKGPPEK) show a composition bias toward basic and acidic residues. Positions 1370–1377 (PPKKKRRV) match the Nuclear localization signal motif. Bromo domains follow at residues 1395–1503 (RRRT…LKEK) and 1517–1626 (LLDD…ITEY). Residues 1648–1826 (AELESLDPMT…SGEHKDGHGK (179 aa)) are disordered. The segment covering 1660–1700 (PYTSQPPDMYDTNTSLSTSRDASVFQDESNLSVLDISTATP) has biased composition (polar residues). Composition is skewed to acidic residues over residues 1714–1729 (EDSDVDVEGYDDEEED), 1740–1750 (GDGDLADEEEG), and 1768–1783 (EGEDDEEDAGSDEEGD). Residues 1787–1797 (SAIQLSESGSD) are compositionally biased toward polar residues. Over residues 1817 to 1826 (SGEHKDGHGK) the composition is skewed to basic and acidic residues.

It belongs to the TAF1 family. In terms of assembly, can bind directly to TATA-box binding protein (TBP). Interacts (via bromo domains) with acetylated lysine residues on the N-terminus of histone H1.4, H2A, H2B, H3 and H4 (in vitro). As to expression, testis specific, expressed apparently in germ cells.

It is found in the nucleus. May act as a functional substitute for TAF1/TAFII250 during male meiosis, when sex chromosomes are transcriptionally silenced. The chain is Transcription initiation factor TFIID subunit 1-like (TAF1L) from Homo sapiens (Human).